The sequence spans 113 residues: Bactofilin BacN (113 aa).

The protein belongs to the bactofilin family. In terms of assembly, interacts with BacO and BacP, the 3 proteins colocalize as an extended structure.

The protein resides in the cytoplasm. It localises to the cytoskeleton. A non-essential component of the chromosome segregation machinery. Positions the ParA-ParB-parS chromosome segregation machinery within the cell; BacP seems to be the most important bactofilin in this process. Forms a heteropolymeric, subpolar scaffold in the cell; BacP probably forms the core, BacO contributes to position and integrity while BacN does not seem to contribute to assembly. In Myxococcus xanthus (strain DK1622), this protein is Bactofilin BacN.